Consider the following 56-residue polypeptide: Serine protease inhibitor Kazal-type 1 (56 aa).

Residues 3–56 (LGREAKCNNNAGGCTKIYNPVCGTDGNTYPNECMLCVENQKRQMPVLIQRSGPC) enclose the Kazal-like domain. 3 cysteine pairs are disulfide-bonded: cysteine 9/cysteine 38, cysteine 16/cysteine 35, and cysteine 24/cysteine 56.

It is found in the secreted. Serine protease inhibitor which exhibits anti-trypsin activity. In the pancreas, protects against trypsin-catalyzed premature activation of zymogens. Its function is as follows. In the male reproductive tract, binds to sperm heads where it modulates sperm capacitance by inhibiting calcium uptake and nitrogen oxide (NO) production. The polypeptide is Serine protease inhibitor Kazal-type 1 (SPINK1) (Equus caballus (Horse)).